Here is a 205-residue protein sequence, read N- to C-terminus: Dephospho-CoA kinase (205 aa).

One can recognise a DPCK domain in the interval 7–205 (IIGVTGRIAS…QGIINYERFE (199 aa)). Residue 15–20 (ASGKDT) coordinates ATP.

The protein belongs to the CoaE family.

Its subcellular location is the cytoplasm. It catalyses the reaction 3'-dephospho-CoA + ATP = ADP + CoA + H(+). It functions in the pathway cofactor biosynthesis; coenzyme A biosynthesis; CoA from (R)-pantothenate: step 5/5. Its function is as follows. Catalyzes the phosphorylation of the 3'-hydroxyl group of dephosphocoenzyme A to form coenzyme A. This is Dephospho-CoA kinase from Borreliella burgdorferi (strain ATCC 35210 / DSM 4680 / CIP 102532 / B31) (Borrelia burgdorferi).